The primary structure comprises 343 residues: MIESDRLISAKAGEYEEVHDRAIRPTLLSEYVGQPTVREQMEIFISAARGRQEALDHVLIFGPPGLGKTTLANIIANEMGVSIKTTSGPVLEKAGDLAAMLTNLEEGDVLFIDEIHRLSAAVEEVLYPAMEDYQLDIMIGEGPAARSIKLDLPPFTLVGATTRAGLLTSPLRDRFGIVQRLEFYNHQDLTHIITRSARLSSVEIDEAGAFEIARRSRGTPRIANRLLRRVRDFAEVRSNGHITADIADQALNMLKVDSQGFDHMDRRLLLAMIEKFDGGPVGVESLAAAISEERGTIEDVLEPFLIQQGYMVRTPRGRMVTSNAYQHFGVVPPRSGREDDLFE.

The segment at 4–184 (SDRLISAKAG…FGIVQRLEFY (181 aa)) is large ATPase domain (RuvB-L). ATP is bound by residues isoleucine 23, arginine 24, glycine 65, lysine 68, threonine 69, threonine 70, 131-133 (EDY), arginine 174, tyrosine 184, and arginine 221. Threonine 69 lines the Mg(2+) pocket. The interval 185 to 255 (NHQDLTHIIT…IADQALNMLK (71 aa)) is small ATPAse domain (RuvB-S). The tract at residues 258-343 (SQGFDHMDRR…RSGREDDLFE (86 aa)) is head domain (RuvB-H). Residues arginine 294, arginine 313, and arginine 318 each contribute to the DNA site.

The protein belongs to the RuvB family. Homohexamer. Forms an RuvA(8)-RuvB(12)-Holliday junction (HJ) complex. HJ DNA is sandwiched between 2 RuvA tetramers; dsDNA enters through RuvA and exits via RuvB. An RuvB hexamer assembles on each DNA strand where it exits the tetramer. Each RuvB hexamer is contacted by two RuvA subunits (via domain III) on 2 adjacent RuvB subunits; this complex drives branch migration. In the full resolvosome a probable DNA-RuvA(4)-RuvB(12)-RuvC(2) complex forms which resolves the HJ.

Its subcellular location is the cytoplasm. It carries out the reaction ATP + H2O = ADP + phosphate + H(+). In terms of biological role, the RuvA-RuvB-RuvC complex processes Holliday junction (HJ) DNA during genetic recombination and DNA repair, while the RuvA-RuvB complex plays an important role in the rescue of blocked DNA replication forks via replication fork reversal (RFR). RuvA specifically binds to HJ cruciform DNA, conferring on it an open structure. The RuvB hexamer acts as an ATP-dependent pump, pulling dsDNA into and through the RuvAB complex. RuvB forms 2 homohexamers on either side of HJ DNA bound by 1 or 2 RuvA tetramers; 4 subunits per hexamer contact DNA at a time. Coordinated motions by a converter formed by DNA-disengaged RuvB subunits stimulates ATP hydrolysis and nucleotide exchange. Immobilization of the converter enables RuvB to convert the ATP-contained energy into a lever motion, pulling 2 nucleotides of DNA out of the RuvA tetramer per ATP hydrolyzed, thus driving DNA branch migration. The RuvB motors rotate together with the DNA substrate, which together with the progressing nucleotide cycle form the mechanistic basis for DNA recombination by continuous HJ branch migration. Branch migration allows RuvC to scan DNA until it finds its consensus sequence, where it cleaves and resolves cruciform DNA. This Marinobacter nauticus (strain ATCC 700491 / DSM 11845 / VT8) (Marinobacter aquaeolei) protein is Holliday junction branch migration complex subunit RuvB.